We begin with the raw amino-acid sequence, 313 residues long: NADH-ubiquinone oxidoreductase chain 1 (313 aa).

8 consecutive transmembrane segments (helical) span residues 6–26 (LLSG…FTLL), 71–91 (VFPF…LWIL), 105–125 (MLLF…AGWF), 149–169 (MSLI…SMIM), 173–193 (FFVW…VSCV), 220–242 (GVGF…VLVI), 255–275 (FGMG…WVRA), and 293–313 (YLPS…ILNG).

This sequence belongs to the complex I subunit 1 family.

It localises to the mitochondrion inner membrane. It catalyses the reaction a ubiquinone + NADH + 5 H(+)(in) = a ubiquinol + NAD(+) + 4 H(+)(out). Core subunit of the mitochondrial membrane respiratory chain NADH dehydrogenase (Complex I) that is believed to belong to the minimal assembly required for catalysis. Complex I functions in the transfer of electrons from NADH to the respiratory chain. The immediate electron acceptor for the enzyme is believed to be ubiquinone. The polypeptide is NADH-ubiquinone oxidoreductase chain 1 (ND1) (Heterololigo bleekeri (Spear squid)).